A 308-amino-acid chain; its full sequence is Elongation factor Ts (308 aa).

An involved in Mg(2+) ion dislocation from EF-Tu region spans residues 80-83 (TDFV).

The protein belongs to the EF-Ts family.

The protein localises to the cytoplasm. Associates with the EF-Tu.GDP complex and induces the exchange of GDP to GTP. It remains bound to the aminoacyl-tRNA.EF-Tu.GTP complex up to the GTP hydrolysis stage on the ribosome. The protein is Elongation factor Ts of Rhodopseudomonas palustris (strain BisB18).